A 141-amino-acid polypeptide reads, in one-letter code: Large ribosomal subunit protein uL11 (141 aa).

This sequence belongs to the universal ribosomal protein uL11 family. As to quaternary structure, part of the ribosomal stalk of the 50S ribosomal subunit. Interacts with L10 and the large rRNA to form the base of the stalk. L10 forms an elongated spine to which L12 dimers bind in a sequential fashion forming a multimeric L10(L12)X complex.

In terms of biological role, forms part of the ribosomal stalk which helps the ribosome interact with GTP-bound translation factors. This is Large ribosomal subunit protein uL11 from Acidianus ambivalens (Desulfurolobus ambivalens).